Reading from the N-terminus, the 303-residue chain is Mesenteric estrogen-dependent adipogenesis protein (303 aa).

In terms of tissue distribution, highly expressed in the visceral fat depot.

The protein resides in the cytoplasm. Functionally, involved in processes that promote adipocyte differentiation, lipid accumulation, and glucose uptake in mature adipocytes. The polypeptide is Mesenteric estrogen-dependent adipogenesis protein (MEDAG) (Homo sapiens (Human)).